The primary structure comprises 287 residues: 2-dehydro-3-deoxyphosphooctonate aldolase (287 aa).

Belongs to the KdsA family.

The protein localises to the cytoplasm. The enzyme catalyses D-arabinose 5-phosphate + phosphoenolpyruvate + H2O = 3-deoxy-alpha-D-manno-2-octulosonate-8-phosphate + phosphate. It functions in the pathway carbohydrate biosynthesis; 3-deoxy-D-manno-octulosonate biosynthesis; 3-deoxy-D-manno-octulosonate from D-ribulose 5-phosphate: step 2/3. The protein operates within bacterial outer membrane biogenesis; lipopolysaccharide biosynthesis. This chain is 2-dehydro-3-deoxyphosphooctonate aldolase, found in Bradyrhizobium sp. (strain ORS 278).